The sequence spans 477 residues: Glycogen synthase (477 aa).

Lysine 15 lines the ADP-alpha-D-glucose pocket.

Belongs to the glycosyltransferase 1 family. Bacterial/plant glycogen synthase subfamily.

It carries out the reaction [(1-&gt;4)-alpha-D-glucosyl](n) + ADP-alpha-D-glucose = [(1-&gt;4)-alpha-D-glucosyl](n+1) + ADP + H(+). It functions in the pathway glycan biosynthesis; glycogen biosynthesis. In terms of biological role, synthesizes alpha-1,4-glucan chains using ADP-glucose. The chain is Glycogen synthase from Salmonella arizonae (strain ATCC BAA-731 / CDC346-86 / RSK2980).